Here is a 441-residue protein sequence, read N- to C-terminus: Putative T-box protein 32 (441 aa).

A DNA-binding region (T-box) is located at residues 18 to 199 (NVIGSSRTSD…TGPSAKKTPE (182 aa)). The tract at residues 268 to 289 (SLSSPAALQQDSTVSSDNDFDD) is disordered. The segment covering 273–284 (AALQQDSTVSSD) has biased composition (polar residues).

It localises to the nucleus. In Caenorhabditis elegans, this protein is Putative T-box protein 32 (tbx-32).